A 126-amino-acid chain; its full sequence is Holo-[acyl-carrier-protein] synthase (126 aa).

2 residues coordinate Mg(2+): Asp9 and Glu58.

This sequence belongs to the P-Pant transferase superfamily. AcpS family. It depends on Mg(2+) as a cofactor.

The protein localises to the cytoplasm. It carries out the reaction apo-[ACP] + CoA = holo-[ACP] + adenosine 3',5'-bisphosphate + H(+). Its function is as follows. Transfers the 4'-phosphopantetheine moiety from coenzyme A to a Ser of acyl-carrier-protein. This chain is Holo-[acyl-carrier-protein] synthase, found in Erwinia tasmaniensis (strain DSM 17950 / CFBP 7177 / CIP 109463 / NCPPB 4357 / Et1/99).